Reading from the N-terminus, the 280-residue chain is L-proline cis-4-hydroxylase (280 aa).

3 residues coordinate Fe cation: H106, D108, and H154. R164 serves as a coordination point for 2-oxoglutarate.

The protein belongs to the L-proline cis-4-/cis-3-hydroxylase family. Requires Fe(2+) as cofactor.

The catalysed reaction is L-proline + 2-oxoglutarate + O2 = cis-4-hydroxy-L-proline + succinate + CO2. Its activity is regulated as follows. Inhibited by metal ions such as Co(2+), Zn(2+), Cu(2+) or Ni(2+). Is also inhibited by EDTA or diethylpyrocarbonate (DEPC) in vitro. Unlike the procollagen-proline cis-3- and trans-4-hydroxylases from mammals, does not necessarily require L-ascorbate for activity although it does increase the activity of the enzyme. Functionally, dioxygenase that catalyzes the 2-oxoglutarate-dependent selective hydroxylation of free L-proline to cis-4-hydroxy-L-proline (cis-4-Hyp). This Rhizobium meliloti (strain 1021) (Ensifer meliloti) protein is L-proline cis-4-hydroxylase.